A 319-amino-acid chain; its full sequence is MKPVFLDFEQPIAELTNKIDELRFVQDESAVDISDEIHRLQKKSNDLTKSIFSKLTPAQISQVSRHPQRPYTLDYIEALFTDFEELHGDRHFADDYAIVGGLARFNGQSVMVVGHQKGRDTKEKIRRNFGMPRPEGYRKALRLMKTAEKFGLPVMTFIDTPGAYPGIGAEERGQSEAIGKNLYELTRLRVPVLCTVIGEGGSGGALAVAVGDYVNMLQYSTYSVISPEGCASILWKTAEKAADAAQALGITADRLQRLDLVDTVIKEPLGGAHRDFGQTMKNVKAVLEKQLHEAQSIPLADLLSRRFDRIMAYGKFSEQ.

In terms of domain architecture, CoA carboxyltransferase C-terminal spans 39–293 (RLQKKSNDLT…KAVLEKQLHE (255 aa)).

It belongs to the AccA family. In terms of assembly, acetyl-CoA carboxylase is a heterohexamer composed of biotin carboxyl carrier protein (AccB), biotin carboxylase (AccC) and two subunits each of ACCase subunit alpha (AccA) and ACCase subunit beta (AccD).

The protein resides in the cytoplasm. It catalyses the reaction N(6)-carboxybiotinyl-L-lysyl-[protein] + acetyl-CoA = N(6)-biotinyl-L-lysyl-[protein] + malonyl-CoA. It participates in lipid metabolism; malonyl-CoA biosynthesis; malonyl-CoA from acetyl-CoA: step 1/1. Functionally, component of the acetyl coenzyme A carboxylase (ACC) complex. First, biotin carboxylase catalyzes the carboxylation of biotin on its carrier protein (BCCP) and then the CO(2) group is transferred by the carboxyltransferase to acetyl-CoA to form malonyl-CoA. The polypeptide is Acetyl-coenzyme A carboxylase carboxyl transferase subunit alpha (Neisseria meningitidis serogroup C / serotype 2a (strain ATCC 700532 / DSM 15464 / FAM18)).